Consider the following 80-residue polypeptide: Peroxidase (80 aa).

The tract at residues 56–80 is disordered; it reads DANEAEANSDLPGFNSSRSELEAAF. P67 is a binding site for substrate. N-linked (GlcNAc...) asparagine glycosylation is present at N70.

The protein belongs to the peroxidase family. Classical plant (class III) peroxidase subfamily. Requires Ca(2+) as cofactor. Heme b is required as a cofactor.

It carries out the reaction 2 a phenolic donor + H2O2 = 2 a phenolic radical donor + 2 H2O. In terms of biological role, removal of H(2)O(2), oxidation of toxic reductants, biosynthesis and degradation of lignin, suberization, auxin catabolism, response to environmental stresses such as wounding, pathogen attack and oxidative stress. These functions might be dependent on each isozyme/isoform in each plant tissue. In Triticum aestivum (Wheat), this protein is Peroxidase.